A 235-amino-acid chain; its full sequence is MNVGIIGAMEPEVKILREAMQNPQTLTKAGFTFYTGELAGNTVTLVQSGIGKVASTIATTLLIDNFAPDCVINTGSAGGFDPSLNVGDVVISSEVRHHDVDVTAFGYEIGQVPQMPAGFAAHPKLVAAAEQTIAQISDVKTLVGLICTGDIFMCDPIRIEKARSDFPTMLAVEMEGASIAQTCHTLNTPFVVIRSMSDIAGKESPQSFEEYLETASINSSKMVVALLEKLTAVSL.

Catalysis depends on E12, which acts as the Proton acceptor. Substrate is bound by residues G78, M153, and 174–175; that span reads ME. D198 functions as the Proton donor in the catalytic mechanism.

This sequence belongs to the PNP/UDP phosphorylase family. MtnN subfamily.

The enzyme catalyses S-adenosyl-L-homocysteine + H2O = S-(5-deoxy-D-ribos-5-yl)-L-homocysteine + adenine. The catalysed reaction is S-methyl-5'-thioadenosine + H2O = 5-(methylsulfanyl)-D-ribose + adenine. It catalyses the reaction 5'-deoxyadenosine + H2O = 5-deoxy-D-ribose + adenine. It participates in amino-acid biosynthesis; L-methionine biosynthesis via salvage pathway; S-methyl-5-thio-alpha-D-ribose 1-phosphate from S-methyl-5'-thioadenosine (hydrolase route): step 1/2. In terms of biological role, catalyzes the irreversible cleavage of the glycosidic bond in both 5'-methylthioadenosine (MTA) and S-adenosylhomocysteine (SAH/AdoHcy) to adenine and the corresponding thioribose, 5'-methylthioribose and S-ribosylhomocysteine, respectively. Also cleaves 5'-deoxyadenosine, a toxic by-product of radical S-adenosylmethionine (SAM) enzymes, into 5-deoxyribose and adenine. This is 5'-methylthioadenosine/S-adenosylhomocysteine nucleosidase from Pseudoalteromonas translucida (strain TAC 125).